We begin with the raw amino-acid sequence, 884 residues long: Receptor-like protein 39 (884 aa).

The first 24 residues, 1 to 24, serve as a signal peptide directing secretion; the sequence is MSELLFRLNFLLLLLLSCVSLASS. The Extracellular portion of the chain corresponds to 25–847; sequence FFSFNDPVVG…EEEEQVLNWK (823 aa). N59, N71, and N92 each carry an N-linked (GlcNAc...) asparagine glycan. LRR repeat units follow at residues 98 to 122, 124 to 146, 147 to 170, 171 to 196, 197 to 223, 225 to 245, 246 to 268, 269 to 292, 294 to 318, and 320 to 344; these read FHQL…EFGM, NKLE…SFSN, LSML…VRNL, RKLT…LFEL, HNLA…NLNK, ELLD…ISNL, TQLT…VQNL, TKLS…LFTM, FLSY…SLSS, and LENL…LINL. N-linked (GlcNAc...) asparagine glycosylation occurs at N146. 4 N-linked (GlcNAc...) asparagine glycosylation sites follow: N190, N208, N244, and N267. N-linked (GlcNAc...) asparagine glycans are attached at residues N304 and N313. The LRR 11; degenerate repeat unit spans residues 345–365; sequence KELHLSFLNTSYPINLKLFSS. N-linked (GlcNAc...) asparagine glycosylation occurs at N353. LRR repeat units lie at residues 366-391, 392-413, 414-438, 440-463, and 464-487; these read LKYL…SYIP, STLE…ILKT, LPNL…LWSL, RLSS…ILVN, and SSVR…PLSV. Residue N403 is glycosylated (N-linked (GlcNAc...) asparagine). N463 carries an N-linked (GlcNAc...) asparagine glycan. Residues 488 to 507 form an LRR 17; degenerate repeat; it reads NYFSARNNRYGGDIPLSICS. LRR repeat units follow at residues 508 to 529, 530 to 553, 554 to 577, 579 to 601, 602 to 625, 628 to 652, 702 to 725, 726 to 749, 750 to 773, and 775 to 798; these read RRSL…PPCP, SNFL…YYAD, APLR…LLNC, ALQF…LKAL, PKLQ…NQGS, FPEL…FFEN, SSSA…IGLL, KALI…LANL, KKIE…IGTL, and FLAY…QITG. N-linked (GlcNAc...) asparagine glycosylation occurs at N520. The N-linked (GlcNAc...) asparagine glycan is linked to N576. N732 carries N-linked (GlcNAc...) asparagine glycosylation. N780 is a glycosylation site (N-linked (GlcNAc...) asparagine). A helical membrane pass occupies residues 848-868; that stretch reads GVGIGYGVGVLLGLAIAQLIA. At 869–884 the chain is on the cytoplasmic side; that stretch reads SYKPEWLVFLFQSRNH.

This sequence belongs to the RLP family.

The protein resides in the cell membrane. The polypeptide is Receptor-like protein 39 (Arabidopsis thaliana (Mouse-ear cress)).